Reading from the N-terminus, the 392-residue chain is 1-deoxy-D-xylulose 5-phosphate reductoisomerase (392 aa).

T10, G11, S12, I13, N38, and N124 together coordinate NADPH. K125 is a 1-deoxy-D-xylulose 5-phosphate binding site. Position 126 (E126) interacts with NADPH. Mn(2+) is bound at residue D150. S151, E152, S176, and H199 together coordinate 1-deoxy-D-xylulose 5-phosphate. Mn(2+) is bound at residue E152. G205 contributes to the NADPH binding site. Positions 212, 217, 218, and 221 each coordinate 1-deoxy-D-xylulose 5-phosphate. E221 contributes to the Mn(2+) binding site.

It belongs to the DXR family. The cofactor is Mg(2+). Requires Mn(2+) as cofactor.

The enzyme catalyses 2-C-methyl-D-erythritol 4-phosphate + NADP(+) = 1-deoxy-D-xylulose 5-phosphate + NADPH + H(+). It participates in isoprenoid biosynthesis; isopentenyl diphosphate biosynthesis via DXP pathway; isopentenyl diphosphate from 1-deoxy-D-xylulose 5-phosphate: step 1/6. Catalyzes the NADPH-dependent rearrangement and reduction of 1-deoxy-D-xylulose-5-phosphate (DXP) to 2-C-methyl-D-erythritol 4-phosphate (MEP). The sequence is that of 1-deoxy-D-xylulose 5-phosphate reductoisomerase from Gloeobacter violaceus (strain ATCC 29082 / PCC 7421).